The chain runs to 233 residues: Small ribosomal subunit protein uS7m (233 aa).

A mitochondrion-targeting transit peptide spans 1-28 (MAAPTGKLLVHRIRAGLTCLTQVRWSRY).

The protein belongs to the universal ribosomal protein uS7 family. Component of the mitochondrial ribosome small subunit (28S) which comprises a 12S rRNA and about 30 distinct proteins.

Its subcellular location is the mitochondrion. In Xenopus laevis (African clawed frog), this protein is Small ribosomal subunit protein uS7m (mrps7).